A 60-amino-acid polypeptide reads, in one-letter code: UPF0434 protein Ssed_2824 (60 aa).

This sequence belongs to the UPF0434 family.

The sequence is that of UPF0434 protein Ssed_2824 from Shewanella sediminis (strain HAW-EB3).